The chain runs to 77 residues: Epoxide hydrolase (77 aa).

As to quaternary structure, monomer.

The catalysed reaction is an epoxide + H2O = an ethanediol. Functionally, this enzyme acts on aliphatic epoxides. Its substrates include epichlorohydrin, epibromohydrin, epoxyoctane and styrene epoxide. The protein is Epoxide hydrolase of Pseudomonas sp. (strain AD1).